The sequence spans 124 residues: Ribonuclease pancreatic (124 aa).

The segment covering 1-13 (KESAAAKFERQHM) has biased composition (basic and acidic residues). The segment at 1–25 (KESAAAKFERQHMDPSPSSASSSNY) is disordered. Residues K7 and R10 each contribute to the substrate site. Catalysis depends on H12, which acts as the Proton acceptor. 4 disulfides stabilise this stretch: C26–C84, C40–C95, C58–C110, and C65–C72. An N-linked (GlcNAc...) asparagine; partial glycan is attached at N34. Substrate-binding positions include 41 to 45 (KPVNT), K66, and R85. The Proton donor role is filled by H119.

The protein belongs to the pancreatic ribonuclease family. Monomer. Interacts with and forms tight 1:1 complexes with RNH1. Dimerization of two such complexes may occur. Interaction with RNH1 inhibits this protein. In terms of tissue distribution, pancreas.

It is found in the secreted. The enzyme catalyses an [RNA] containing cytidine + H2O = an [RNA]-3'-cytidine-3'-phosphate + a 5'-hydroxy-ribonucleotide-3'-[RNA].. It carries out the reaction an [RNA] containing uridine + H2O = an [RNA]-3'-uridine-3'-phosphate + a 5'-hydroxy-ribonucleotide-3'-[RNA].. Its function is as follows. Endonuclease that catalyzes the cleavage of RNA on the 3' side of pyrimidine nucleotides. Acts on single-stranded and double-stranded RNA. In Capreolus capreolus (European roe deer), this protein is Ribonuclease pancreatic (RNASE1).